The sequence spans 88 residues: Phosphocarrier protein HPr (88 aa).

In terms of domain architecture, HPr spans 1–88; that stretch reads MEKKEFHIVA…ETLQKEGLAE (88 aa). His-15 (pros-phosphohistidine intermediate) is an active-site residue. Position 46 is a phosphoserine; by HPrK/P (Ser-46).

This sequence belongs to the HPr family. Monomer.

It is found in the cytoplasm. Its activity is regulated as follows. Phosphorylation on Ser-46 inhibits the phosphoryl transfer from enzyme I to HPr. In terms of biological role, general (non sugar-specific) component of the phosphoenolpyruvate-dependent sugar phosphotransferase system (sugar PTS). This major carbohydrate active-transport system catalyzes the phosphorylation of incoming sugar substrates concomitantly with their translocation across the cell membrane. The phosphoryl group from phosphoenolpyruvate (PEP) is transferred to the phosphoryl carrier protein HPr by enzyme I. Phospho-HPr then transfers it to the PTS EIIA domain. Functionally, P-Ser-HPr interacts with the catabolite control protein A (CcpA), forming a complex that binds to DNA at the catabolite response elements cre, operator sites preceding a large number of catabolite-regulated genes. Thus, P-Ser-HPr is a corepressor in carbon catabolite repression (CCR), a mechanism that allows bacteria to coordinate and optimize the utilization of available carbon sources. P-Ser-HPr also plays a role in inducer exclusion, in which it probably interacts with several non-PTS permeases and inhibits their transport activity. This Enterococcus faecalis (strain ATCC 700802 / V583) protein is Phosphocarrier protein HPr (ptsH).